The primary structure comprises 694 residues: Beta-galactosidase (694 aa).

A disordered region spans residues 1–31 (MGKRFPSGWFSPRVHPPRRQRSPMTNQATPG). Residues 22 to 31 (SPMTNQATPG) are compositionally biased toward polar residues. Substrate is bound by residues Arg-144 and Asn-182. The active-site Proton donor is the Glu-183. The Nucleophile role is filled by Glu-341. Substrate is bound by residues Trp-349 and 389-392 (EKFH).

This sequence belongs to the glycosyl hydrolase 42 family. In terms of assembly, homotrimer.

It carries out the reaction Hydrolysis of terminal non-reducing beta-D-galactose residues in beta-D-galactosides.. Strongly inhibited by glucose. No activity is lost during treatment with 100 mM EDTA after 2 hours. Activity not considerably affected by metal ions (5 mM), including Na(+), K(+), Mg(2+), Co(2+) and Ca(2+). Completely inhibited by Cu(2+) and Zn(2+) (5 mM) and is strongly inhibited by Mn(2+) (11%), Fe(2+) (25%) and Ni(2+) (38%) in comparison with the activity in the absence of cations (100%). Activity not affected by dithiothreitol, beta-mercaptoethanol and L-cysteine whereas reduced glutathione almost completely inactivates it. With ONPG as substrate, the addition of ethanol up to 20% still slightly stimulates activity. The activity increases up to 120% in the presence of 8% v/v ethanol at pH 5.5. Functionally, hydrolyzes p-nitrophenyl-beta-D-galactopyranoside (PNPG), o-nitrophenyl-beta-D-galactopyranoside (ONPG) and chromogen 5-bromo-4-chloro-3-indolyl-beta-D-galactopyranoside (X-gal), with highest activity against PNPG. Also acts on p-nitrophenyl-beta-D-glucopyranoside (PNPGlu) and o-nitrophenyl-beta-D-glucopyranoside (ONPGlu), but with significantly lower activity. This chain is Beta-galactosidase, found in Arthrobacter sp.